The following is a 99-amino-acid chain: Large ribosomal subunit protein bL21 (99 aa).

The protein belongs to the bacterial ribosomal protein bL21 family. In terms of assembly, part of the 50S ribosomal subunit. Contacts protein L20.

Its function is as follows. This protein binds to 23S rRNA in the presence of protein L20. This is Large ribosomal subunit protein bL21 from Mesomycoplasma hyopneumoniae (strain 7448) (Mycoplasma hyopneumoniae).